A 195-amino-acid chain; its full sequence is NADH dehydrogenase [ubiquinone] iron-sulfur protein 3 (195 aa).

It belongs to the complex I 30 kDa subunit family. As to quaternary structure, complex I is composed of about 45 different subunits. This is a component of the iron-sulfur (IP) fragment of the enzyme.

It localises to the mitochondrion inner membrane. It catalyses the reaction a ubiquinone + NADH + 5 H(+)(in) = a ubiquinol + NAD(+) + 4 H(+)(out). Functionally, core subunit of the mitochondrial membrane respiratory chain NADH dehydrogenase (Complex I) that is believed to belong to the minimal assembly required for catalysis. Complex I functions in the transfer of electrons from NADH to the respiratory chain. The immediate electron acceptor for the enzyme is believed to be ubiquinone. In Marchantia polymorpha (Common liverwort), this protein is NADH dehydrogenase [ubiquinone] iron-sulfur protein 3 (NAD9).